A 78-amino-acid polypeptide reads, in one-letter code: Large ribosomal subunit protein bL28 (78 aa).

Residues 1–22 (MAKVCQVTGKRPVTGHNVSHAK) form a disordered region.

The protein belongs to the bacterial ribosomal protein bL28 family.

This is Large ribosomal subunit protein bL28 from Saccharophagus degradans (strain 2-40 / ATCC 43961 / DSM 17024).